Consider the following 59-residue polypeptide: Large ribosomal subunit protein bL32c (59 aa).

Residues 1-20 (MAVPKKRTSKSKKRIRKSVW) are disordered.

Belongs to the bacterial ribosomal protein bL32 family.

It is found in the plastid. Its subcellular location is the chloroplast. In Angiopteris evecta (Mule's foot fern), this protein is Large ribosomal subunit protein bL32c.